The primary structure comprises 401 residues: Glycerol-3-phosphate dehydrogenase [NAD(+)] 1 (401 aa).

Residues glycine 40–glycine 45, phenylalanine 128, lysine 151, and alanine 184 each bind NAD(+). Lysine 151 serves as a coordination point for substrate. Lysine 244 (proton acceptor) is an active-site residue. NAD(+) is bound by residues arginine 309 and glutamine 338. Arginine 309–asparagine 310 serves as a coordination point for substrate.

It belongs to the NAD-dependent glycerol-3-phosphate dehydrogenase family.

Its subcellular location is the cytoplasm. The catalysed reaction is sn-glycerol 3-phosphate + NAD(+) = dihydroxyacetone phosphate + NADH + H(+). This chain is Glycerol-3-phosphate dehydrogenase [NAD(+)] 1 (GPD1), found in Zygosaccharomyces rouxii.